A 278-amino-acid polypeptide reads, in one-letter code: Toxin coregulated pilus biosynthesis protein D (278 aa).

Residues 30–50 (LLVAIIFLVLSILGGGAYLYY) traverse the membrane as a helical segment.

Its subcellular location is the cell membrane. In terms of biological role, involved in TCP pilus biogenesis. The chain is Toxin coregulated pilus biosynthesis protein D (tcpD) from Vibrio cholerae serotype O1 (strain ATCC 39315 / El Tor Inaba N16961).